A 508-amino-acid polypeptide reads, in one-letter code: Proto-oncogene tyrosine-protein kinase LCK (508 aa).

G2 carries N-myristoyl glycine lipidation. S-palmitoyl cysteine attachment occurs at residues C3 and C5. The SH3 domain maps to 60-120 (LQDKLVVALY…PHNFVAMVNS (61 aa)). An SH2 domain is found at 126 to 223 (WFFKNLSRKN…GLCTRLGKPC (98 aa)). The 254-residue stretch at 244–497 (LKLVEKLGAG…YMKSVLEDFF (254 aa)) folds into the Protein kinase domain. ATP contacts are provided by residues 250–258 (LGAGQFGEV) and K272. D363 (proton acceptor) is an active-site residue. Y393 is modified (phosphotyrosine; by autocatalysis). A Phosphotyrosine modification is found at Y504.

This sequence belongs to the protein kinase superfamily. Tyr protein kinase family. SRC subfamily. As to quaternary structure, binds to the cytoplasmic domain of cell surface receptors, such as CD4, CD8. Phosphorylated on Tyr-393, which increases enzymatic activity, this site is dephosphorylated by PTN22. Phosphorylated on Tyr-504, presumably by CSK, which decreases activity. Dephosphorylated by PTPRC/CD45. Dephosphorylation at Tyr-393 by PTPN2 negatively regulates T-cells differentiation. In terms of processing, palmitoylation regulates association with the plasma membrane.

It is found in the cell membrane. Its subcellular location is the cytoplasm. The protein resides in the cytosol. It catalyses the reaction L-tyrosyl-[protein] + ATP = O-phospho-L-tyrosyl-[protein] + ADP + H(+). Inhibited by tyrosine phosphorylation. Functionally, tyrosine kinase that plays an essential role for the selection and maturation of developing T-cell in the thymus and in mature T-cell function. Is constitutively associated with the cytoplasmic portions of the CD4 and CD8 surface receptors and plays a key role in T-cell antigen receptor(TCR)-linked signal transduction pathways. The protein is Proto-oncogene tyrosine-protein kinase LCK (LCK) of Gallus gallus (Chicken).